The chain runs to 220 residues: 3-dehydroquinate dehydratase (220 aa).

Residues glutamate 29 to arginine 31 and arginine 56 each bind 3-dehydroquinate. Histidine 116 acts as the Proton donor/acceptor in catalysis. The active-site Schiff-base intermediate with substrate is the lysine 142. Residues arginine 180, serine 200, and glutamine 204 each coordinate 3-dehydroquinate.

This sequence belongs to the type-I 3-dehydroquinase family. As to quaternary structure, homodimer.

The catalysed reaction is 3-dehydroquinate = 3-dehydroshikimate + H2O. It participates in metabolic intermediate biosynthesis; chorismate biosynthesis; chorismate from D-erythrose 4-phosphate and phosphoenolpyruvate: step 3/7. Involved in the third step of the chorismate pathway, which leads to the biosynthesis of aromatic amino acids. Catalyzes the cis-dehydration of 3-dehydroquinate (DHQ) and introduces the first double bond of the aromatic ring to yield 3-dehydroshikimate. In Methanocaldococcus jannaschii (strain ATCC 43067 / DSM 2661 / JAL-1 / JCM 10045 / NBRC 100440) (Methanococcus jannaschii), this protein is 3-dehydroquinate dehydratase.